The chain runs to 333 residues: Adenosine deaminase (333 aa).

Residues histidine 12 and histidine 14 each coordinate Zn(2+). Substrate-binding residues include histidine 14, aspartate 16, and glycine 170. Residue histidine 197 participates in Zn(2+) binding. Glutamate 200 functions as the Proton donor in the catalytic mechanism. Zn(2+) is bound at residue aspartate 278. Substrate is bound at residue aspartate 279.

Belongs to the metallo-dependent hydrolases superfamily. Adenosine and AMP deaminases family. Adenosine deaminase subfamily. It depends on Zn(2+) as a cofactor.

It catalyses the reaction adenosine + H2O + H(+) = inosine + NH4(+). The enzyme catalyses 2'-deoxyadenosine + H2O + H(+) = 2'-deoxyinosine + NH4(+). In terms of biological role, catalyzes the hydrolytic deamination of adenosine and 2-deoxyadenosine. This chain is Adenosine deaminase, found in Photorhabdus laumondii subsp. laumondii (strain DSM 15139 / CIP 105565 / TT01) (Photorhabdus luminescens subsp. laumondii).